The chain runs to 106 residues: MGKTNDWLDFDQLAEDKVRDALKPPSMYKVILVNDDYTPMEFVIDVLQKFFSYDVERATQLMLAVHYQGKAICGVFTAEVAETKVAMVNKYARENEHPLLCTLEKA.

The protein belongs to the ClpS family. In terms of assembly, binds to the N-terminal domain of the chaperone ClpA.

Functionally, involved in the modulation of the specificity of the ClpAP-mediated ATP-dependent protein degradation. The sequence is that of ATP-dependent Clp protease adapter protein ClpS from Citrobacter koseri (strain ATCC BAA-895 / CDC 4225-83 / SGSC4696).